Consider the following 63-residue polypeptide: Small ribosomal subunit protein eS17 (63 aa).

The protein belongs to the eukaryotic ribosomal protein eS17 family.

The sequence is that of Small ribosomal subunit protein eS17 from Methanococcus maripaludis (strain C7 / ATCC BAA-1331).